We begin with the raw amino-acid sequence, 443 residues long: Cobyrinate a,c-diamide synthase (443 aa).

Positions Lys248 to Tyr433 constitute a GATase cobBQ-type domain. The Nucleophile role is filled by Cys327.

It belongs to the CobB/CbiA family. Mg(2+) is required as a cofactor.

The enzyme catalyses cob(II)yrinate + 2 L-glutamine + 2 ATP + 2 H2O = cob(II)yrinate a,c diamide + 2 L-glutamate + 2 ADP + 2 phosphate + 2 H(+). It catalyses the reaction Ni-sirohydrochlorin + 2 L-glutamine + 2 ATP + 2 H2O = Ni-sirohydrochlorin a,c-diamide + 2 L-glutamate + 2 ADP + 2 phosphate + 2 H(+). The protein operates within cofactor biosynthesis; adenosylcobalamin biosynthesis; cob(II)yrinate a,c-diamide from sirohydrochlorin (anaerobic route): step 10/10. Functionally, catalyzes the ATP-dependent amidation of the two carboxylate groups at positions a and c of cobyrinate, using either L-glutamine or ammonia as the nitrogen source. Involved in the biosynthesis of the unique nickel-containing tetrapyrrole coenzyme F430, the prosthetic group of methyl-coenzyme M reductase (MCR), which plays a key role in methanogenesis and anaerobic methane oxidation. Catalyzes the ATP-dependent amidation of the two carboxylate groups at positions a and c of Ni-sirohydrochlorin, using L-glutamine or ammonia as the nitrogen source. In Methanocaldococcus jannaschii (strain ATCC 43067 / DSM 2661 / JAL-1 / JCM 10045 / NBRC 100440) (Methanococcus jannaschii), this protein is Cobyrinate a,c-diamide synthase.